The chain runs to 465 residues: Cysteine--tRNA ligase (465 aa).

Position 29 (Cys29) interacts with Zn(2+). The 'HIGH' region signature appears at Pro31–Asn41. Cys209, His234, and Glu238 together coordinate Zn(2+). A 'KMSKS' region motif is present at residues Lys266–Ser270. ATP is bound at residue Lys269. Ser270 is modified (phosphoserine).

Belongs to the class-I aminoacyl-tRNA synthetase family. As to quaternary structure, monomer. Zn(2+) is required as a cofactor.

Its subcellular location is the cytoplasm. The catalysed reaction is tRNA(Cys) + L-cysteine + ATP = L-cysteinyl-tRNA(Cys) + AMP + diphosphate. This chain is Cysteine--tRNA ligase, found in Bacillus cereus (strain AH187).